The following is an 80-amino-acid chain: MKLTCVLITTVLFLTASQLITADYSRDKRQYRAVRLRDEMRNFKGARDCGEQGQGCYIYPCCPGLTCLGGGTGGGVCQPQ.

A signal peptide spans 1–22 (MKLTCVLITTVLFLTASQLITA). A propeptide spanning residues 23–47 (DYSRDKRQYRAVRLRDEMRNFKGAR) is cleaved from the precursor. 3 disulfide bridges follow: Cys-49-Cys-62, Cys-56-Cys-67, and Cys-61-Cys-77. A 4-hydroxyproline mark is found at Pro-60 and Pro-63.

It belongs to the conotoxin O1 superfamily. In terms of tissue distribution, expressed by the venom duct.

It localises to the secreted. Functionally, ion channel inhibitor that inhibits the increase in intracellular calcium upon depolarization in DRG neurons. In vivo, both intraperitoneal and intracranial injections into mice induce hyperactivity. This chain is Conotoxin Vi6.2, found in Conus virgo (Virgin cone).